The sequence spans 375 residues: CD2 homolog (375 aa).

A signal peptide spans 1-16; that stretch reads MIIILIFLIIPNIVLS. At 17 to 207 the chain is on the extracellular side; the sequence is IDYWVSFNKT…YLDFFQVASY (191 aa). N-linked (GlcNAc...) asparagine; by host glycosylation is found at Asn-24, Asn-80, Asn-105, Asn-122, Asn-134, Asn-145, Asn-168, Asn-176, and Asn-183. Cystine bridges form between Cys-123/Cys-190 and Cys-130/Cys-173. The chain crosses the membrane as a helical span at residues 208 to 228; sequence MFYMIIFIATGIIASIFISII. At 229 to 375 the chain is on the cytoplasmic side; the sequence is TFLSLRKRKK…ISLIHVDRII (147 aa). Residues 242-278 form a disordered region; sequence EIESPSPSESNEEEQCQHDDTTSIHEPSPREPLLPKP. A compositionally biased stretch (basic and acidic residues) spans 256–270; sequence QCQHDDTTSIHEPSP. 5 tandem repeats follow at residues 305 to 310, 311 to 316, 317 to 322, 323 to 328, and 329 to 334. The interval 305 to 334 is 5 X 6 AA tandem repeats of K-[LP]-C-[PRS]-[PS]-[PS]; the sequence is KLCPPPKPCPPPKPCPPPKPCPPPKPCPSS. The disordered stretch occupies residues 323–350; that stretch reads KPCPPPKPCPSSESCSPPESYSLPKPLP. Low complexity predominate over residues 332–346; sequence PSSESCSPPESYSLP.

This sequence belongs to the asfivirus CD2 homolog protein family. As to quaternary structure, both glycosylated and nonglycosylated forms interact (via C-terminus) with the host AP-1 complex. Post-translationally, cleaved into two fragments of 63 kDa and 26 kDa containing respectively the glycosylated N-terminus and the nonglycosylated C-terminus. A full-length 89-kDa glycosylated form also exists.

The protein localises to the host membrane. It is found in the virion membrane. The protein resides in the host Golgi apparatus. May play an immunosuppressive role by inhibiting lymphocyte proliferation and subsequently facilitating viral replication and generalization of infection. Responsible for viral hemadsorption, which may help viral spread. Increases virus replication in the tick vector at the step of virus uptake or replication in the tick gut. May play a role in the host Golgi reorganization to yield viral factories. May play a role in host cell penetration. The protein is CD2 homolog of Ornithodoros (relapsing fever ticks).